The chain runs to 366 residues: tRNA pseudouridine synthase B (366 aa).

Asp44 (nucleophile) is an active-site residue.

The protein belongs to the pseudouridine synthase TruB family. Type 1 subfamily.

The enzyme catalyses uridine(55) in tRNA = pseudouridine(55) in tRNA. Its function is as follows. Responsible for synthesis of pseudouridine from uracil-55 in the psi GC loop of transfer RNAs. The sequence is that of tRNA pseudouridine synthase B from Treponema pallidum (strain Nichols).